The chain runs to 688 residues: Polyphosphate kinase (688 aa).

An ATP-binding site is contributed by Asn45. Residues Arg375 and Arg405 each contribute to the Mg(2+) site. The PLD phosphodiesterase domain occupies 430–464 (PGLKIHAKLFLISRKEGDDVVRYAHIGTGNFNEKT). His435 functions as the Phosphohistidine intermediate in the catalytic mechanism. ATP-binding residues include Tyr468, Arg564, and His592.

This sequence belongs to the polyphosphate kinase 1 (PPK1) family. The cofactor is Mg(2+). In terms of processing, an intermediate of this reaction is the autophosphorylated ppk in which a phosphate is covalently linked to a histidine residue through a N-P bond.

It catalyses the reaction [phosphate](n) + ATP = [phosphate](n+1) + ADP. Catalyzes the reversible transfer of the terminal phosphate of ATP to form a long-chain polyphosphate (polyP). This is Polyphosphate kinase from Salmonella typhimurium (strain LT2 / SGSC1412 / ATCC 700720).